A 271-amino-acid polypeptide reads, in one-letter code: Aminoglycoside N(3)-acetyltransferase III (271 aa).

Residues His-31, Ala-32, Ser-33, Val-34, and Lys-35 each coordinate CoA. 3 residues coordinate a 2-deoxystreptamine antibiotic: Tyr-64, Asp-72, and Glu-102. CoA-binding residues include Ser-104, Val-105, and Phe-109. A 2-deoxystreptamine antibiotic contacts are provided by Glu-123, Tyr-146, and Asp-170. Residues Thr-171 and Thr-173 each contribute to the CoA site. His-176, Thr-212, Gly-213, and Phe-221 together coordinate a 2-deoxystreptamine antibiotic.

It belongs to the antibiotic N-acetyltransferase family. As to quaternary structure, homodimer.

It carries out the reaction a 2-deoxystreptamine antibiotic + acetyl-CoA = an N(3)-acetyl-2-deoxystreptamine antibiotic + CoA + H(+). Its function is as follows. Resistance to antibiotics containing the 2-deoxy-streptamine ring including dibekacin, gentamicin, kanamycin, sisomicin, tobramycin and neomycin, but not to amikacin or netilmicin. Acetylates a broad range of both 4,5- and 4,6-disubstituted aminoglycosides, including neomycin, paromomycin, ribostamycin, sisomicin, gentamicin, tobramycin and kanamycin, with no preference of one disubstitution over the other. Acetylates sisomicin and kanamycin most and least efficiently, respectively. Does not modify plazomicin. The sequence is that of Aminoglycoside N(3)-acetyltransferase III from Pseudomonas aeruginosa.